The following is a 106-amino-acid chain: Toxin-like structure LSTX-D9 (106 aa).

The signal sequence occupies residues methionine 1–serine 20. Positions aspartate 21–arginine 41 are excised as a propeptide. 4 cysteine pairs are disulfide-bonded: cysteine 45/cysteine 60, cysteine 52/cysteine 69, cysteine 59/cysteine 85, and cysteine 71/cysteine 83.

It belongs to the neurotoxin 19 (CSTX) family. 02 (D7) subfamily. As to expression, expressed by the venom gland.

Its subcellular location is the secreted. This Lycosa singoriensis (Wolf spider) protein is Toxin-like structure LSTX-D9.